Consider the following 879-residue polypeptide: MTTTAPFLTGNQIRDRFLQFYAQHNHQILPSASLVPEDPTVLLTIAGMLPFKPIFLGQKQPDFPRATTSQKCIRTNDIENVGRTARHHTFFEMLGNFSFGDYFKEQAIKWAWELSTKVYRLPPENIVVSVFEKDDEAFKLWEEMIGIPPQRIKRMGEKDNFWKAGPTGPCGPCSELYYDFHPELGEDNIDLEDDSRFIEFYNLVFMEYNRDAEGNLAPLQNKNIDTGMGLERMAQILQKVPNNYETDLIFPIIETAANIANIDYQKATEKTKVSLKVIGDHVRSVVHMIADGITASNTDRGYVLRRLIRRVVRHGRLIGIEGQFIKQVAETAIELSENAYPQVRERESFIKGELEREETAFLKTLERGEKLLAEIIEKTETQGQISGVDAFTLYDTYGFPLELTQEIAEESNLTVNIEEFEAEMRQQQERSKAAHETIDLTVQGSLDKLAEHIHPTAFLGYTDLQLTAKVEAVLIQGKTVDTAEAGSEVQIVLDQTPFYGESGGQIGDRGFLTGENLVIRVEDVQKESGIFVHFGRVERGSVSVNDQVTATIDRACRRQVQANHTATHLLQAALKKVVDKSISQAGSLVAFDRLRFDFNCPRAVTSEELQEIEDLINTWIAEAHETEIAVMPIETAKEKGAIAMFGEKYGSEVRVIDVPGVSMELCGGTHVKNTAEIGLFKIMSESGISSGVRRIEAVAGPAVLEYLKVRETVVKDLCDRFKIKPEEISDRITTLQSELKTTQKELEAVKQDLAVAKSDQLLTEAESIGEFKLLVSDMGEMDAKALQTAAERLQQKLGEGAVILGSIPSEGKVSLVAAFSKKVNQEKQLQAGKFIGQIAKICGGGGGGRPNLAQAGGREPSKLSEALLTAKEQLTESLK.

Zn(2+)-binding residues include histidine 564, histidine 568, cysteine 666, and histidine 670.

This sequence belongs to the class-II aminoacyl-tRNA synthetase family. Zn(2+) serves as cofactor.

Its subcellular location is the cytoplasm. It carries out the reaction tRNA(Ala) + L-alanine + ATP = L-alanyl-tRNA(Ala) + AMP + diphosphate. Catalyzes the attachment of alanine to tRNA(Ala) in a two-step reaction: alanine is first activated by ATP to form Ala-AMP and then transferred to the acceptor end of tRNA(Ala). Also edits incorrectly charged Ser-tRNA(Ala) and Gly-tRNA(Ala) via its editing domain. In Crocosphaera subtropica (strain ATCC 51142 / BH68) (Cyanothece sp. (strain ATCC 51142)), this protein is Alanine--tRNA ligase.